Consider the following 209-residue polypeptide: Uracil phosphoribosyltransferase (209 aa).

Residues Arg-79, Arg-104, and 131–139 each bind 5-phospho-alpha-D-ribose 1-diphosphate; that span reads DPMLATGGS. Uracil contacts are provided by residues Ile-194 and 199–201; that span reads GDA. A 5-phospho-alpha-D-ribose 1-diphosphate-binding site is contributed by Asp-200.

The protein belongs to the UPRTase family. The cofactor is Mg(2+).

The catalysed reaction is UMP + diphosphate = 5-phospho-alpha-D-ribose 1-diphosphate + uracil. Its pathway is pyrimidine metabolism; UMP biosynthesis via salvage pathway; UMP from uracil: step 1/1. With respect to regulation, allosterically activated by GTP. Its function is as follows. Catalyzes the conversion of uracil and 5-phospho-alpha-D-ribose 1-diphosphate (PRPP) to UMP and diphosphate. This is Uracil phosphoribosyltransferase from Clostridioides difficile (strain 630) (Peptoclostridium difficile).